A 553-amino-acid chain; its full sequence is MSDIALTVSILALVAVVGLFIGNVKFRGIGLGIGGVLFGGIIVGHFVSQAGMTLSSDMLHVIQEFGLILFVYTIGIQVGPGFFASLRVSGLRLNLFAVLIVIIGGLVTAILHKLFDIPLPVVLGIFSGAVTNTPALGAGQQILRDLGTPMEMVDQMGMSYAMAYPFGICGILFTMWMLRVIFRVNVETEAQQHESSRTNAGALIKTINIRVENPNRHDLAIKDVPILNGDKIICSRLKREETLKVPSPDTIIQLGDLLHLVGQPADLHNAQLVIGQEVDTSLSTKGTDLRVERVVVTNENVLGKRIRDLHFKERYDVVISRLNRAGVELVASGDISLQFGDILNLVGRPSAIDAVANVLGNAQQKLQQVQMLPVFIGIGLGVLLGSIPVFVPGFPAALKLGLAGGPLIMALILGRIGSIGKLYWFMPPSANLALRELGIVLFLSIVGLKSGGDFVNTLVNGEGLSWIGYGALITAVPLITVGILARMLAKMNYLTMCGMLAGSMTDPPALAFANNLHPTSGAAALSYATVYPLVMFLRIITPQLLAVLFWSIG.

Transmembrane regions (helical) follow at residues I4–V24, G28–S48, F65–S85, L95–F115, and M158–L178. RCK C-terminal domains are found at residues Q191–Q276 and D279–N361. 6 helical membrane passes run M371–V391, G393–L413, I439–V459, L464–L484, Y493–A513, and L533–G553.

Belongs to the AAE transporter (TC 2.A.81) family. YidE subfamily.

The protein resides in the cell membrane. This Shigella flexneri serotype 5b (strain 8401) protein is Putative transport protein YidE.